The following is a 506-amino-acid chain: Light-independent protochlorophyllide reductase subunit B (506 aa).

Asp36 is a binding site for [4Fe-4S] cluster. Asp279 functions as the Proton donor in the catalytic mechanism. A substrate-binding site is contributed by 414 to 415 (GL).

It belongs to the ChlB/BchB/BchZ family. In terms of assembly, protochlorophyllide reductase is composed of three subunits; BchL, BchN and BchB. Forms a heterotetramer of two BchB and two BchN subunits. It depends on [4Fe-4S] cluster as a cofactor.

The catalysed reaction is chlorophyllide a + oxidized 2[4Fe-4S]-[ferredoxin] + 2 ADP + 2 phosphate = protochlorophyllide a + reduced 2[4Fe-4S]-[ferredoxin] + 2 ATP + 2 H2O. The protein operates within porphyrin-containing compound metabolism; bacteriochlorophyll biosynthesis (light-independent). Functionally, component of the dark-operative protochlorophyllide reductase (DPOR) that uses Mg-ATP and reduced ferredoxin to reduce ring D of protochlorophyllide (Pchlide) to form chlorophyllide a (Chlide). This reaction is light-independent. The NB-protein (BchN-BchB) is the catalytic component of the complex. The sequence is that of Light-independent protochlorophyllide reductase subunit B from Methylobacterium sp. (strain 4-46).